Here is a 303-residue protein sequence, read N- to C-terminus: Kynurenine formamidase (303 aa).

An HGGXW motif is present at residues 95–99; it reads HGGYW. The Nucleophile role is filled by S164. Active-site residues include D247 and H279.

Belongs to the kynurenine formamidase family. As to quaternary structure, homodimer.

It localises to the cytoplasm. It is found in the cytosol. The protein localises to the nucleus. The catalysed reaction is N-formyl-L-kynurenine + H2O = L-kynurenine + formate + H(+). It functions in the pathway amino-acid degradation; L-tryptophan degradation via kynurenine pathway; L-kynurenine from L-tryptophan: step 2/2. In terms of biological role, catalyzes the hydrolysis of N-formyl-L-kynurenine to L-kynurenine, the second step in the kynurenine pathway of tryptophan degradation. Kynurenine may be further oxidized to nicotinic acid, NAD(H) and NADP(H). Required for elimination of toxic metabolites. The chain is Kynurenine formamidase from Homo sapiens (Human).